We begin with the raw amino-acid sequence, 228 residues long: MNRASLEKDPHEVASMFDGVARRYDLTNTVLSLGQDRFWRRATREALQLSPSDKVLDLAAGTAVSTVELAGSGAWCVAADFSVGMLAAGAARDVPKVAGDATRLPFADGVFDAVTISFGLRNVVDHSAGLREMARVTRPGGRLVVCEFSTPTNKLFATVYKEYLMRALPAMASAVSSNPDAYVYLAESIRAWPDQAELAARIEAAGWSDVRWRNLTGGIVALHAATKA.

S-adenosyl-L-methionine is bound by residues threonine 62, aspartate 80, 100-101 (DA), and serine 117.

It belongs to the class I-like SAM-binding methyltransferase superfamily. MenG/UbiE family.

It catalyses the reaction a 2-demethylmenaquinol + S-adenosyl-L-methionine = a menaquinol + S-adenosyl-L-homocysteine + H(+). Its pathway is quinol/quinone metabolism; menaquinone biosynthesis; menaquinol from 1,4-dihydroxy-2-naphthoate: step 2/2. Its function is as follows. Methyltransferase required for the conversion of demethylmenaquinol (DMKH2) to menaquinol (MKH2). The sequence is that of Demethylmenaquinone methyltransferase from Mycolicibacterium vanbaalenii (strain DSM 7251 / JCM 13017 / BCRC 16820 / KCTC 9966 / NRRL B-24157 / PYR-1) (Mycobacterium vanbaalenii).